The primary structure comprises 124 residues: Small ribosomal subunit protein uS12 (124 aa).

The residue at position 89 (Asp89) is a 3-methylthioaspartic acid.

It belongs to the universal ribosomal protein uS12 family. As to quaternary structure, part of the 30S ribosomal subunit. Contacts proteins S8 and S17. May interact with IF1 in the 30S initiation complex.

In terms of biological role, with S4 and S5 plays an important role in translational accuracy. Interacts with and stabilizes bases of the 16S rRNA that are involved in tRNA selection in the A site and with the mRNA backbone. Located at the interface of the 30S and 50S subunits, it traverses the body of the 30S subunit contacting proteins on the other side and probably holding the rRNA structure together. The combined cluster of proteins S8, S12 and S17 appears to hold together the shoulder and platform of the 30S subunit. This Shewanella piezotolerans (strain WP3 / JCM 13877) protein is Small ribosomal subunit protein uS12.